A 583-amino-acid chain; its full sequence is Complement factor I (583 aa).

Residues 1-18 (MKLLHVFLLFLCFHLRFC) form the signal peptide. 17 disulfides stabilise this stretch: Cys-33-Cys-255, Cys-43-Cys-54, Cys-48-Cys-59, Cys-61-Cys-93, Cys-67-Cys-86, Cys-75-Cys-106, Cys-141-Cys-181, Cys-154-Cys-214, Cys-186-Cys-196, Cys-229-Cys-247, Cys-241-Cys-256, Cys-259-Cys-271, Cys-266-Cys-284, Cys-278-Cys-293, Cys-327-Cys-453, Cys-365-Cys-381, and Cys-373-Cys-444. One can recognise a Kazal-like domain in the interval 55–108 (IEGTCVCKLPYQCPKNGTAVCATNRRSFPTYCQQKSLECLHPGTKFLNNGTCTA). The N-linked (GlcNAc...) asparagine glycan is linked to Asn-70. Asn-103 carries N-linked (GlcNAc...) (complex) asparagine glycosylation. The 99-residue stretch at 114–212 (VSLKHGNTDS…TMGYQDFADV (99 aa)) folds into the SRCR domain. Asn-177 carries N-linked (GlcNAc...) asparagine glycosylation. 2 LDL-receptor class A domains span residues 213–257 (VCYT…LCCK) and 258–294 (ACQG…VGCA). Residues Lys-239, Asp-242, Ile-244, Asp-246, Asp-252, and Glu-253 each coordinate Ca(2+). Ca(2+) is bound by residues Tyr-276, Asn-279, Glu-281, Asp-283, Asp-289, and Glu-290. The region spanning 340–574 (IVGGKRAQLG…YFDWISYHVG (235 aa)) is the Peptidase S1 domain. Catalysis depends on charge relay system residues His-380 and Asp-429. Residues Asn-464 and Asn-494 are each glycosylated (N-linked (GlcNAc...) asparagine). Disulfide bonds link Cys-467–Cys-531, Cys-495–Cys-510, and Cys-521–Cys-550. Ser-525 (charge relay system) is an active-site residue. An N-linked (GlcNAc...) asparagine glycan is attached at Asn-536.

Belongs to the peptidase S1 family. Heterodimer of a light and heavy chains; disulfide-linked. The fully processed and mature protein circulates as a zymogen, and is allosterically activated by substrate-induced remodeling of the active site. Interacts with C3b. Interacts with complement factor H. In terms of assembly, (Microbial infection) Interacts with Staphylococcus aureus clumping factor A/ClfA; this interaction enhances cleavage of C3b into iC3b by CFI. In terms of tissue distribution, expressed in the liver by hepatocytes. Also present in other cells such as monocytes, fibroblasts or keratinocytes.

Its subcellular location is the secreted. It is found in the extracellular space. The catalysed reaction is Inactivates complement subcomponents C3b, iC3b and C4b by proteolytic cleavage.. Its function is as follows. Trypsin-like serine protease that plays an essential role in regulating the immune response by controlling all complement pathways. Inhibits these pathways by cleaving three peptide bonds in the alpha-chain of C3b and two bonds in the alpha-chain of C4b thereby inactivating these proteins. Essential cofactors for these reactions include factor H and C4BP in the fluid phase and membrane cofactor protein/CD46 and CR1 on cell surfaces. The presence of these cofactors on healthy cells allows degradation of deposited C3b by CFI in order to prevent undesired complement activation, while in apoptotic cells or microbes, the absence of such cofactors leads to C3b-mediated complement activation and subsequent opsonization. In Homo sapiens (Human), this protein is Complement factor I (CFI).